Consider the following 152-residue polypeptide: Protein Turandot X (152 aa).

The signal sequence occupies residues 1-22; that stretch reads MGFYISSLLICVFLGIVRFASA.

It belongs to the Turandot family.

The protein resides in the secreted. A humoral factor that may play a role in stress tolerance. The sequence is that of Protein Turandot X from Drosophila erecta (Fruit fly).